The following is a 144-amino-acid chain: Large ribosomal subunit protein uL15 (144 aa).

Residues 1–44 (MKLNELMPSEGSRTNRKRIGRGTSSGTGKTAGRGQKGQKARGKV) are disordered. The segment covering 23–35 (TSSGTGKTAGRGQ) has biased composition (gly residues).

Belongs to the universal ribosomal protein uL15 family. As to quaternary structure, part of the 50S ribosomal subunit.

Binds to the 23S rRNA. This Pediococcus pentosaceus (strain ATCC 25745 / CCUG 21536 / LMG 10740 / 183-1w) protein is Large ribosomal subunit protein uL15.